The following is a 269-amino-acid chain: Elongation factor Ts (269 aa).

The involved in Mg(2+) ion dislocation from EF-Tu stretch occupies residues 76–79 (TDFV).

The protein belongs to the EF-Ts family.

The protein resides in the cytoplasm. Functionally, associates with the EF-Tu.GDP complex and induces the exchange of GDP to GTP. It remains bound to the aminoacyl-tRNA.EF-Tu.GTP complex up to the GTP hydrolysis stage on the ribosome. This chain is Elongation factor Ts, found in Deinococcus geothermalis (strain DSM 11300 / CIP 105573 / AG-3a).